The sequence spans 20 residues: Maximin-Ht (20 aa).

The protein belongs to the bombinin family. In terms of tissue distribution, expressed by the skin glands.

The protein localises to the secreted. Functionally, has antimicrobial activity. This is Maximin-Ht from Bombina maxima (Giant fire-bellied toad).